The sequence spans 223 residues: Ribose-5-phosphate isomerase A (223 aa).

Residues 29–32, 82–85, and 95–98 contribute to the substrate site; these read TGST, DGAD, and KGGG. Glutamate 104 (proton acceptor) is an active-site residue. Lysine 122 serves as a coordination point for substrate.

It belongs to the ribose 5-phosphate isomerase family. In terms of assembly, homodimer.

The catalysed reaction is aldehydo-D-ribose 5-phosphate = D-ribulose 5-phosphate. Its pathway is carbohydrate degradation; pentose phosphate pathway; D-ribose 5-phosphate from D-ribulose 5-phosphate (non-oxidative stage): step 1/1. Functionally, catalyzes the reversible conversion of ribose-5-phosphate to ribulose 5-phosphate. In Neisseria meningitidis serogroup C / serotype 2a (strain ATCC 700532 / DSM 15464 / FAM18), this protein is Ribose-5-phosphate isomerase A.